A 360-amino-acid chain; its full sequence is WAT1-related protein At3g28070 (360 aa).

Transmembrane regions (helical) follow at residues 15–35, 45–65, 84–104, 108–128, 140–160, 190–210, 224–244, 248–268, 286–306, and 311–331; these read AVFL…STLF, IYPF…PSLF, IGLL…GIEY, TLAS…AIIF, SLAK…VIFY, WLIG…SFIL, VSFL…LVVE, PSVW…MAIV, LYLA…GAIF, and LYLG…AVMW. Residues 30 to 158 enclose the EamA domain; that stretch reads GISTLFKFAT…LSLIGALVVI (129 aa).

The protein belongs to the drug/metabolite transporter (DMT) superfamily. Plant drug/metabolite exporter (P-DME) (TC 2.A.7.4) family.

The protein resides in the membrane. This Arabidopsis thaliana (Mouse-ear cress) protein is WAT1-related protein At3g28070.